Consider the following 320-residue polypeptide: Cytochrome f (320 aa).

The signal sequence occupies residues 1–35; the sequence is MHTKNLFYSRTQQITQYLSALLMMVILTRTSISSA. Positions 36, 56, 59, and 60 each coordinate heme. A helical transmembrane segment spans residues 286–306; the sequence is VQVLLFFFASIILAQIFLVLK.

It belongs to the cytochrome f family. The 4 large subunits of the cytochrome b6-f complex are cytochrome b6, subunit IV (17 kDa polypeptide, petD), cytochrome f and the Rieske protein, while the 4 small subunits are PetG, PetL, PetM and PetN. The complex functions as a dimer. It depends on heme as a cofactor.

It localises to the plastid thylakoid membrane. In terms of biological role, component of the cytochrome b6-f complex, which mediates electron transfer between photosystem II (PSII) and photosystem I (PSI), cyclic electron flow around PSI, and state transitions. The protein is Cytochrome f of Cuscuta gronovii (Common dodder).